The chain runs to 398 residues: Selenide, water dikinase (398 aa).

Residues 1-21 are disordered; sequence MSHKRPQSSAGESNGAVDLKT. The active site involves C46. ATP is bound by residues K49, 72 to 74, D97, D120, and 171 to 174; these read GMD and GGQT. D74 is a binding site for Mg(2+). Mg(2+) is bound at residue D120. D278 is a Mg(2+) binding site.

Belongs to the selenophosphate synthase 1 family. Class I subfamily. Homodimer. Mg(2+) is required as a cofactor.

It carries out the reaction hydrogenselenide + ATP + H2O = selenophosphate + AMP + phosphate + 2 H(+). Its function is as follows. Synthesizes selenophosphate from selenide and ATP. This is Selenide, water dikinase from Leishmania major.